A 231-amino-acid polypeptide reads, in one-letter code: Platelet-activating factor acetylhydrolase IB subunit alpha1 (231 aa).

S2 is subject to N-acetylserine. S2 bears the Phosphoserine mark. Residues S47, D192, and H195 contribute to the active site.

The protein belongs to the 'GDSL' lipolytic enzyme family. Platelet-activating factor acetylhydrolase IB beta/gamma subunits subfamily. As to quaternary structure, forms a catalytic dimer which is either homodimer (alpha1/alpha1 homodimer) or heterodimer with PAFAH1B2 (alpha1/alpha2 heterodimer). Component of the cytosolic (PAF-AH (I)) heterotetrameric enzyme, which is composed of PAFAH1B1 (beta), PAFAH1B2 (alpha2) and PAFAH1B3 (alpha1) subunits. The catalytic activity of the enzyme resides in the alpha1 (PAFAH1B3) and alpha2 (PAFAH1B2) subunits, whereas the beta subunit (PAFAH1B1) has regulatory activity. Trimer formation is not essential for the catalytic activity. Interacts with VLDLR; this interaction may modulate the Reelin pathway.

The protein localises to the cytoplasm. The catalysed reaction is a 1-O-alkyl-2-acetyl-sn-glycero-3-phosphocholine + H2O = a 1-O-alkyl-sn-glycero-3-phosphocholine + acetate + H(+). The enzyme catalyses 1-O-hexadecyl-2-acetyl-sn-glycero-3-phosphocholine + H2O = 1-O-hexadecyl-sn-glycero-3-phosphocholine + acetate + H(+). It carries out the reaction 1-O-hexadecyl-2-acetyl-sn-glycero-3-phosphate + H2O = 1-O-hexadecyl-sn-glycero-3-phosphate + acetate + H(+). With respect to regulation, beta subunit (PAFAH1B1) inhibits the acetylhydrolase activity of the alpha1/alpha1 catalytic homodimer. In terms of biological role, alpha1 catalytic subunit of the cytosolic type I platelet-activating factor (PAF) acetylhydrolase (PAF-AH (I)) heterotetrameric enzyme that catalyzes the hydrolyze of the acetyl group at the sn-2 position of PAF and its analogs and modulates the action of PAF. The activity and substrate specificity of PAF-AH (I) are affected by its subunit composition. Both alpha1/alpha1 homodimer (PAFAH1B3/PAFAH1B3 homodimer) and alpha1/alpha2 heterodimer(PAFAH1B3/PAFAH1B2 heterodimer) hydrolyze 1-O-alkyl-2-acetyl-sn-glycero-3-phosphoric acid (AAGPA) more efficiently than PAF, but they have little hydrolytic activity towards 1-O-alkyl-2-acetyl-sn-glycero-3-phosphorylethanolamine (AAGPE). Plays an important role during the development of brain. This is Platelet-activating factor acetylhydrolase IB subunit alpha1 from Pongo abelii (Sumatran orangutan).